The following is a 258-amino-acid chain: Exu regulon transcriptional regulator (258 aa).

In terms of domain architecture, HTH gntR-type spans 7–75 (RRLYQQLAAD…KGSGIHVVSN (69 aa)). Positions 35–54 (ERFIADEKNVSRTVVREAII) form a DNA-binding region, H-T-H motif.

Functionally, repressor for the exu regulon that encode genes involved in hexuronate utilization. It regulates the ExuT, UxaCA and UxuRAB operons. Binds D-tagaturonate and D-fructuronate as inducers. The protein is Exu regulon transcriptional regulator (exuR) of Escherichia coli O157:H7.